We begin with the raw amino-acid sequence, 565 residues long: NAD-dependent malic enzyme (565 aa).

Y104 (proton donor) is an active-site residue. R157 is a binding site for NAD(+). K175 (proton acceptor) is an active-site residue. A divalent metal cation is bound by residues E246, D247, and D270. 2 residues coordinate NAD(+): D270 and N418.

Belongs to the malic enzymes family. As to quaternary structure, homotetramer. It depends on Mg(2+) as a cofactor. The cofactor is Mn(2+).

The catalysed reaction is (S)-malate + NAD(+) = pyruvate + CO2 + NADH. It carries out the reaction oxaloacetate + H(+) = pyruvate + CO2. The sequence is that of NAD-dependent malic enzyme from Proteus mirabilis (strain HI4320).